Consider the following 1132-residue polypeptide: Tyrosine-protein kinase JAK2 (1132 aa).

Residues 1 to 239 are interaction with cytokine/interferon/growth hormone receptors; it reads MGMACLTMTE…RYRFRRFIQQ (239 aa). Residues 37–380 form the FERM domain; sequence PVLLVYLYHS…GYYRLTADAH (344 aa). Phosphotyrosine; by autocatalysis is present on Tyr119. Residues Tyr372 and Tyr373 each carry the phosphotyrosine modification. The SH2; atypical domain maps to 401 to 482; it reads HGPISMDFAI…SLKDLLNCYQ (82 aa). Residue Ser523 is modified to Phosphoserine. Residues 545-809 form the Protein kinase 1 domain; sequence LIFNESLGQG…AIIRDLNSLF (265 aa). 2 positions are modified to phosphotyrosine: Tyr570 and Tyr813. The Protein kinase 2 domain occupies 849 to 1126; that stretch reads LKFLQQLGKG…RDLALRVDQI (278 aa). Residue 855–863 coordinates ATP; that stretch reads LGKGNFGSV. A Phosphotyrosine; by autocatalysis modification is found at Tyr868. Lys882 is a binding site for ATP. Residues Tyr966 and Tyr972 each carry the phosphotyrosine; by autocatalysis modification. Catalysis depends on Asp976, which acts as the Proton acceptor. A phosphotyrosine; by autocatalysis mark is found at Tyr1007 and Tyr1008.

Belongs to the protein kinase superfamily. Tyr protein kinase family. JAK subfamily. As to quaternary structure, interacts with IL23R, SKB1 and STAM2. Interacts with EPOR. Interacts with LYN. Interacts with SIRPA. Interacts with SH2B1. Interacts with TEC. Interacts with IFNGR2 (via intracellular domain). Interacts with LEPR (Isoform B). Interacts with HSP90AB1; promotes functional activation in a heat shock-dependent manner. Interacts with STRA6. Interacts with RHEX; this interaction occurs in a erythropoietin (EPO)-dependent manner. Interacts with ASB2; the interaction targets JAK2 for Notch-induced proteasomal degradation. Mg(2+) serves as cofactor. In terms of processing, autophosphorylated, leading to regulate its activity. Leptin promotes phosphorylation on tyrosine residues, including phosphorylation on Tyr-813. Autophosphorylation on Tyr-119 in response to EPO down-regulates its kinase activity. Autophosphorylation on Tyr-868, Tyr-966 and Tyr-972 in response to growth hormone (GH) are required for maximal kinase activity. Also phosphorylated by TEC. Phosphorylated on tyrosine residues in response to interferon gamma signaling. Phosphorylated on tyrosine residues in response to a signaling cascade that is activated by increased cellular retinol. Post-translationally, undergoes Notch-induced ubiquitination and subsequent proteasomal degradation which is mediated by ASB1 or ASB2, the substrate-recognition components of probable ECS E3 ubiquitin-protein ligase complexes.

It is found in the endomembrane system. It localises to the cytoplasm. The protein resides in the nucleus. It carries out the reaction L-tyrosyl-[protein] + ATP = O-phospho-L-tyrosyl-[protein] + ADP + H(+). Regulated by autophosphorylation, can both activate or decrease activity. Heme regulates its activity by enhancing the phosphorylation on Tyr-1007 and Tyr-1008. Its function is as follows. Non-receptor tyrosine kinase involved in various processes such as cell growth, development, differentiation or histone modifications. Mediates essential signaling events in both innate and adaptive immunity. In the cytoplasm, plays a pivotal role in signal transduction via its association with type I receptors such as growth hormone (GHR), prolactin (PRLR), leptin (LEPR), erythropoietin (EPOR), thrombopoietin (THPO); or type II receptors including IFN-alpha, IFN-beta, IFN-gamma and multiple interleukins. Following ligand-binding to cell surface receptors, phosphorylates specific tyrosine residues on the cytoplasmic tails of the receptor, creating docking sites for STATs proteins. Subsequently, phosphorylates the STATs proteins once they are recruited to the receptor. Phosphorylated STATs then form homodimer or heterodimers and translocate to the nucleus to activate gene transcription. For example, cell stimulation with erythropoietin (EPO) during erythropoiesis leads to JAK2 autophosphorylation, activation, and its association with erythropoietin receptor (EPOR) that becomes phosphorylated in its cytoplasmic domain. Then, STAT5 (STAT5A or STAT5B) is recruited, phosphorylated and activated by JAK2. Once activated, dimerized STAT5 translocates into the nucleus and promotes the transcription of several essential genes involved in the modulation of erythropoiesis. Part of a signaling cascade that is activated by increased cellular retinol and that leads to the activation of STAT5 (STAT5A or STAT5B). In addition, JAK2 mediates angiotensin-2-induced ARHGEF1 phosphorylation. Plays a role in cell cycle by phosphorylating CDKN1B. Cooperates with TEC through reciprocal phosphorylation to mediate cytokine-driven activation of FOS transcription. In the nucleus, plays a key role in chromatin by specifically mediating phosphorylation of 'Tyr-41' of histone H3 (H3Y41ph), a specific tag that promotes exclusion of CBX5 (HP1 alpha) from chromatin. Up-regulates the potassium voltage-gated channel activity of KCNA3. The protein is Tyrosine-protein kinase JAK2 of Pongo abelii (Sumatran orangutan).